A 119-amino-acid chain; its full sequence is Circadian clock oscillator protein KaiB (119 aa).

The protein belongs to the KaiB family. May undergo a major conformational rearrangment; in the free state forms homooligomers. When bound to KaiC switches to a monomeric thioredoxin-fold (KaiB(fs)). The active oscillator complex is probably KaiC(6):KaiB(6).

Its function is as follows. Component of the KaiBC clock protein complex, which constitutes the main circadian regulator in cyanobacteria; it may modify the ATPase activity of KaiC. Functionally, may be a metamorphic protein which reversibly switches between an inactive tetrameric fold and a rare, thioredoxin-like monomeric fold (KaiB(fs)). KaiB(fs) binds phospho-KaiC, and perhaps clock output effectors. This is Circadian clock oscillator protein KaiB from Prochlorococcus marinus (strain MIT 9313).